The sequence spans 141 residues: Nucleoside diphosphate kinase (141 aa).

The ATP site is built by Lys-9, Phe-57, Arg-85, Thr-91, Arg-102, and Asn-112. His-115 (pros-phosphohistidine intermediate) is an active-site residue.

This sequence belongs to the NDK family. In terms of assembly, homotetramer. The cofactor is Mg(2+).

The protein localises to the cytoplasm. It catalyses the reaction a 2'-deoxyribonucleoside 5'-diphosphate + ATP = a 2'-deoxyribonucleoside 5'-triphosphate + ADP. The enzyme catalyses a ribonucleoside 5'-diphosphate + ATP = a ribonucleoside 5'-triphosphate + ADP. Functionally, major role in the synthesis of nucleoside triphosphates other than ATP. The ATP gamma phosphate is transferred to the NDP beta phosphate via a ping-pong mechanism, using a phosphorylated active-site intermediate. The sequence is that of Nucleoside diphosphate kinase from Chlamydia muridarum (strain MoPn / Nigg).